A 297-amino-acid polypeptide reads, in one-letter code: Polyhedral envelope protein (297 aa).

This sequence belongs to the baculoviridae PE family.

The protein resides in the virion membrane. Major component of the polyhedra envelope. The protein is Polyhedral envelope protein of Orgyia pseudotsugata (Douglas-fir tussock moth).